Here is a 331-residue protein sequence, read N- to C-terminus: Polysaccharide lyase (331 aa).

The first 22 residues, 1-22 (MSLPLRLALLPTLLASASAFAA), serve as a signal peptide directing secretion. Cys23 is lipidated: N-palmitoyl cysteine. Cys23 is lipidated: S-diacylglycerol cysteine.

Belongs to the polysaccharide lyase 5 family.

Its subcellular location is the cell outer membrane. The catalysed reaction is Eliminative cleavage of alginate to give oligosaccharides with 4-deoxy-alpha-L-erythro-hex-4-enuronosyl groups at their non-reducing ends and beta-D-mannuronate at their reducing end.. It carries out the reaction [hyaluronan](n) = n 3-(4-deoxy-beta-D-gluc-4-enuronosyl)-N-acetyl-D-glucosamine + H2O. The enzyme catalyses Eliminative cleavage of (1-&gt;4)-beta-D-glucuronans to give oligosaccharides with 4-deoxy-beta-D-gluc-4-enuronosyl groups at their non-reducing ends. Complete degradation of glucuronans results in the formation of tetrasaccharides.. Its activity is regulated as follows. Is inhibited by mono- and divalent cations as well as L-ascorbic acid 6-hexadecanoate. In terms of biological role, polysaccharide lyase that catalyzes the depolymerization of several anionic polysaccharides via a beta-elimination mechanism. Exhibits broad substrate specificity, catalyzing the degradation of not only alginate and poly-beta-D-mannuronate (poly-ManA), but poly-beta-D-glucuronate (poly-GlcA or poly-GlcUA) and hyaluronate (HA) as well. The oligosaccharide products formed by enzymatic cleavage are comprised mainly of disaccharides, with a lower abundance of trimers and pentamers. Is not active on poly-D-galacturonate, heparin and heparin sulfate. This chain is Polysaccharide lyase, found in Stenotrophomonas maltophilia (strain K279a).